The primary structure comprises 308 residues: Methionyl-tRNA formyltransferase (308 aa).

A (6S)-5,6,7,8-tetrahydrofolate-binding site is contributed by 110 to 113 (SLLP).

Belongs to the Fmt family.

The enzyme catalyses L-methionyl-tRNA(fMet) + (6R)-10-formyltetrahydrofolate = N-formyl-L-methionyl-tRNA(fMet) + (6S)-5,6,7,8-tetrahydrofolate + H(+). Functionally, attaches a formyl group to the free amino group of methionyl-tRNA(fMet). The formyl group appears to play a dual role in the initiator identity of N-formylmethionyl-tRNA by promoting its recognition by IF2 and preventing the misappropriation of this tRNA by the elongation apparatus. This Neisseria meningitidis serogroup A / serotype 4A (strain DSM 15465 / Z2491) protein is Methionyl-tRNA formyltransferase.